We begin with the raw amino-acid sequence, 928 residues long: Serine/threonine-protein kinase atg1 (928 aa).

The Protein kinase domain maps to 6-315 (YTRLDEIGRG…FPEFFENEVI (310 aa)). ATP-binding positions include 12–20 (IGRGSFATV) and Lys-35. Asp-149 functions as the Proton acceptor in the catalytic mechanism. 2 disordered regions span residues 318 to 470 (PIPG…EQER) and 544 to 571 (FSGR…PTSA). The segment covering 359-371 (TRREREVNREDVY) has biased composition (basic and acidic residues). Residues 437-452 (TTTAIERQRSRNTYSE) are compositionally biased toward polar residues. Composition is skewed to basic and acidic residues over residues 459 to 470 (QPADKLKEEQER) and 548 to 564 (SRAD…ERRY).

The protein belongs to the protein kinase superfamily. Ser/Thr protein kinase family. APG1/unc-51/ULK1 subfamily. In terms of assembly, homodimer. Forms a ternary complex with ATG13 and ATG17.

It localises to the cytoplasm. Its subcellular location is the preautophagosomal structure membrane. It carries out the reaction L-seryl-[protein] + ATP = O-phospho-L-seryl-[protein] + ADP + H(+). The enzyme catalyses L-threonyl-[protein] + ATP = O-phospho-L-threonyl-[protein] + ADP + H(+). In terms of biological role, serine/threonine protein kinase involved in the cytoplasm to vacuole transport (Cvt) and found to be essential in autophagy, where it is required for the formation of autophagosomes. Involved in the clearance of protein aggregates which cannot be efficiently cleared by the proteasome. Required for selective autophagic degradation of the nucleus (nucleophagy) as well as for mitophagy which contributes to regulate mitochondrial quantity and quality by eliminating the mitochondria to a basal level to fulfill cellular energy requirements and preventing excess ROS production. Also involved in endoplasmic reticulum-specific autophagic process, in selective removal of ER-associated degradation (ERAD) substrates. Plays a key role in ATG9 and ATG23 cycling through the pre-autophagosomal structure and is necessary to promote ATG18 binding to ATG9 through phosphorylation of ATG9. Catalyzes phosphorylation of ATG4, decreasing the interaction between ATG4 and ATG8 and impairing deconjugation of PE-conjugated forms of ATG8. This Aspergillus clavatus (strain ATCC 1007 / CBS 513.65 / DSM 816 / NCTC 3887 / NRRL 1 / QM 1276 / 107) protein is Serine/threonine-protein kinase atg1.